A 477-amino-acid chain; its full sequence is Ribulose bisphosphate carboxylase large chain (477 aa).

Residues 1 to 2 (MS) constitute a propeptide that is removed on maturation. Proline 3 carries the N-acetylproline modification. Lysine 14 carries the N6,N6,N6-trimethyllysine modification. Residues asparagine 123 and threonine 173 each coordinate substrate. Lysine 175 functions as the Proton acceptor in the catalytic mechanism. Residue lysine 177 participates in substrate binding. Mg(2+) is bound by residues lysine 201, aspartate 203, and glutamate 204. N6-carboxylysine is present on lysine 201. Histidine 294 functions as the Proton acceptor in the catalytic mechanism. The substrate site is built by arginine 295, histidine 327, and serine 379.

This sequence belongs to the RuBisCO large chain family. Type I subfamily. As to quaternary structure, heterohexadecamer of 8 large chains and 8 small chains; disulfide-linked. The disulfide link is formed within the large subunit homodimers. Requires Mg(2+) as cofactor. Post-translationally, the disulfide bond which can form in the large chain dimeric partners within the hexadecamer appears to be associated with oxidative stress and protein turnover.

The protein localises to the plastid. It localises to the chloroplast. It catalyses the reaction 2 (2R)-3-phosphoglycerate + 2 H(+) = D-ribulose 1,5-bisphosphate + CO2 + H2O. The catalysed reaction is D-ribulose 1,5-bisphosphate + O2 = 2-phosphoglycolate + (2R)-3-phosphoglycerate + 2 H(+). Its function is as follows. RuBisCO catalyzes two reactions: the carboxylation of D-ribulose 1,5-bisphosphate, the primary event in carbon dioxide fixation, as well as the oxidative fragmentation of the pentose substrate in the photorespiration process. Both reactions occur simultaneously and in competition at the same active site. This Cichorium intybus (Chicory) protein is Ribulose bisphosphate carboxylase large chain.